The primary structure comprises 102 residues: Small ribosomal subunit protein uS10 (102 aa).

This sequence belongs to the universal ribosomal protein uS10 family. Part of the 30S ribosomal subunit.

Its function is as follows. Involved in the binding of tRNA to the ribosomes. The protein is Small ribosomal subunit protein uS10 of Chelativorans sp. (strain BNC1).